The primary structure comprises 301 residues: J domain-containing protein 1 (301 aa).

A J domain is found at 58–150 (TPYDIFGIPK…KKKIVYDTTR (93 aa)). The helical transmembrane segment at 208–228 (WTVIGIICGLAICIEGTALLA) threads the bilayer.

Belongs to the DnaJ family.

It localises to the mitochondrion membrane. Its function is as follows. Probable chaperone. The protein is J domain-containing protein 1 (JID1) of Saccharomyces cerevisiae (strain ATCC 204508 / S288c) (Baker's yeast).